The primary structure comprises 423 residues: Glucose-1-phosphate adenylyltransferase (423 aa).

Alpha-D-glucose 1-phosphate is bound by residues Tyr107, Gly172, 187 to 188 (EK), and Ser205.

Belongs to the bacterial/plant glucose-1-phosphate adenylyltransferase family. Homotetramer.

The catalysed reaction is alpha-D-glucose 1-phosphate + ATP + H(+) = ADP-alpha-D-glucose + diphosphate. It participates in glycan biosynthesis; glycogen biosynthesis. Involved in the biosynthesis of ADP-glucose, a building block required for the elongation reactions to produce glycogen. Catalyzes the reaction between ATP and alpha-D-glucose 1-phosphate (G1P) to produce pyrophosphate and ADP-Glc. The protein is Glucose-1-phosphate adenylyltransferase of Cereibacter sphaeroides (strain ATCC 17025 / ATH 2.4.3) (Rhodobacter sphaeroides).